A 160-amino-acid polypeptide reads, in one-letter code: S-ribosylhomocysteine lyase (160 aa).

Fe cation is bound by residues His57, His61, and Cys127.

It belongs to the LuxS family. As to quaternary structure, homodimer. It depends on Fe cation as a cofactor.

The enzyme catalyses S-(5-deoxy-D-ribos-5-yl)-L-homocysteine = (S)-4,5-dihydroxypentane-2,3-dione + L-homocysteine. Functionally, involved in the synthesis of autoinducer 2 (AI-2) which is secreted by bacteria and is used to communicate both the cell density and the metabolic potential of the environment. The regulation of gene expression in response to changes in cell density is called quorum sensing. Catalyzes the transformation of S-ribosylhomocysteine (RHC) to homocysteine (HC) and 4,5-dihydroxy-2,3-pentadione (DPD). The protein is S-ribosylhomocysteine lyase of Streptococcus agalactiae serotype V (strain ATCC BAA-611 / 2603 V/R).